We begin with the raw amino-acid sequence, 61 residues long: Large ribosomal subunit protein bL32 (61 aa).

It belongs to the bacterial ribosomal protein bL32 family.

This is Large ribosomal subunit protein bL32 from Phytoplasma mali (strain AT).